The following is a 79-amino-acid chain: uncharacterized protein (79 aa).

The N-terminal stretch at 1–33 (MRFIIRTVMLIALVWIGLLLSGYGVLIGSKENA) is a signal peptide.

This is an uncharacterized protein from Escherichia coli O157:H7.